The sequence spans 399 residues: uncharacterized protein (399 aa).

8 WD repeats span residues 59-99, 102-141, 144-185, 187-227, 241-280, 283-322, 324-363, and 366-399; these read EHKD…QICQ, GHKDSIVAIDWSFDGTYIATGGMDSQVRLWKSSTGFEFIT, ETVD…QVMY, HTAP…PECR, ETAAGWTSFDCNAEGNVLFLGGSSGKVKVVNINSSHILAS, AQTESVEAIALCTALPICACASVDGTVALYDSASLKFRKS, PHEQAVIDCKFLPNTPYLLTACADCVIRKWDVRSGQLLGE, and GHQEPILCMAITPDGKRVVTGSDDTELLVFDCEH.

It is found in the cytoplasm. Its subcellular location is the nucleus. This is an uncharacterized protein from Schizosaccharomyces pombe (strain 972 / ATCC 24843) (Fission yeast).